A 396-amino-acid chain; its full sequence is Serine/threonine-protein kinase GRIK1 (396 aa).

The tract at residues 22 to 65 is disordered; the sequence is ERSRHSPNPYDDDTYSHDSGETSNPGGDDEEGEEEEEVEELSRS. Over residues 48-60 the composition is skewed to acidic residues; sequence GDDEEGEEEEEVE. The Protein kinase domain maps to 108–369; sequence FVRERKIGSG…LKAVAEHPWI (262 aa). Residues 114-122 and Lys137 contribute to the ATP site; that span reads IGSGSYGKV. Thr154 carries the post-translational modification Phosphothreonine; by autocatalysis. Asp239 acts as the Proton acceptor in catalysis. Ser261 is modified (phosphoserine; by KIN10).

It belongs to the protein kinase superfamily. Ser/Thr protein kinase family. In terms of assembly, associates with the SNF1-related protein kinase (SnRK) complex. Interacts with AL1, a geminivirus (TGMV) protein essential for viral replication. Expressed in shoot apical meristem, leaf primordium and emerging petiole (at protein level).

It localises to the cytoplasm. Its subcellular location is the nucleus. It carries out the reaction L-seryl-[protein] + ATP = O-phospho-L-seryl-[protein] + ADP + H(+). The enzyme catalyses L-threonyl-[protein] + ATP = O-phospho-L-threonyl-[protein] + ADP + H(+). Its activity is regulated as follows. Activated when autophosphorylated at Thr-154 and inactivated when phosphorylated at Ser-261 by SnRK1.1/KIN10. Activates SnRK1.1/KIN10 and SnRK1.2/KIN11 by phosphorylation of their activation-loop 'Thr-198' and 'Thr-176', respectively. Required for the regulation by SnRK1 kinases of the transcription of a large set of genes, the modification the activity of metabolic enzymes, and the control of various nutrient-responsive cellular developmental processes. The polypeptide is Serine/threonine-protein kinase GRIK1 (GRIK1) (Arabidopsis thaliana (Mouse-ear cress)).